An 873-amino-acid chain; its full sequence is Protein SEY1 (873 aa).

Residues 1-750 (MVANGHFFAG…KRSAIGGITQ (750 aa)) are Cytoplasmic-facing. The GB1/RHD3-type G domain maps to 50-308 (GFNYHLISVF…IPADGFAVYA (259 aa)). Residue 60–67 (GSQSTGKS) coordinates GTP. Residues 677–701 (LDKWIGHTPSSATPADEEDLTPIGG) form a disordered region. Over residues 691–701 (ADEEDLTPIGG) the composition is skewed to acidic residues. A helical transmembrane segment spans residues 751-771 (VPLYFYGLLLALGWNEIVAVL). At 772-774 (RNP) the chain is on the lumenal side. Residues 775-795 (AYFLLLFVCAVTAYVTYQLNL) form a helical membrane-spanning segment. The Cytoplasmic segment spans residues 796 to 873 (WGPIIKMTEA…IDDADDDDDF (78 aa)). Residues 841–873 (EGYDMSNMKNRKSAGGYQNNRSHIDDADDDDDF) form a disordered region.

Belongs to the TRAFAC class dynamin-like GTPase superfamily. GB1/RHD3 GTPase family. RHD3 subfamily.

The protein localises to the endoplasmic reticulum membrane. In terms of biological role, cooperates with the reticulon proteins and tubule-shaping DP1 family proteins to generate and maintain the structure of the tubular endoplasmic reticulum network. Has GTPase activity, which is required for its function in ER organization. The sequence is that of Protein SEY1 from Paracoccidioides lutzii (strain ATCC MYA-826 / Pb01) (Paracoccidioides brasiliensis).